We begin with the raw amino-acid sequence, 181 residues long: NADH-quinone oxidoreductase subunit 2 (181 aa).

Residues cysteine 83, serine 87, cysteine 88, cysteine 124, and cysteine 128 each contribute to the [2Fe-2S] cluster site. Residues cysteine 144 and cysteine 172 are joined by a disulfide bond.

The protein belongs to the complex I 24 kDa subunit family. In terms of assembly, NDH-1 is composed of 15 different subunits, Nqo1 to Nqo15. The complex has a L-shaped structure, with the hydrophobic arm (subunits Nqo7, Nqo8 and Nqo10 to Nqo14) embedded in the membrane and the hydrophilic peripheral arm (subunits Nqo1 to Nqo6, Nqo9 and Nqo15) protruding into the bacterial cytoplasm. The hydrophilic domain contains all the redox centers. The cofactor is [2Fe-2S] cluster.

It is found in the cell membrane. It carries out the reaction a quinone + NADH + 5 H(+)(in) = a quinol + NAD(+) + 4 H(+)(out). Its function is as follows. NDH-1 shuttles electrons from NADH, via FMN and iron-sulfur (Fe-S) centers, to quinones in the respiratory chain. The immediate electron acceptor for the enzyme in this species is menaquinone. Couples the redox reaction to proton translocation (for every two electrons transferred, four hydrogen ions are translocated across the cytoplasmic membrane), and thus conserves the redox energy in a proton gradient required for the synthesis of ATP. The protein is NADH-quinone oxidoreductase subunit 2 (nqo2) of Thermus thermophilus (strain ATCC 27634 / DSM 579 / HB8).